Consider the following 338-residue polypeptide: Heat-inducible transcription repressor HrcA (338 aa).

It belongs to the HrcA family.

Functionally, negative regulator of class I heat shock genes (grpE-dnaK-dnaJ and groELS operons). Prevents heat-shock induction of these operons. This Bacillus cereus (strain ATCC 10987 / NRS 248) protein is Heat-inducible transcription repressor HrcA.